A 535-amino-acid polypeptide reads, in one-letter code: MAKKFPLFHPFSRRLHIVLLCMIGFFCTTFMRIHFALTMTCMVNSTALAVENEIKLAGNSNVSEISIIEEINLGSNGQCGLMDEDGQKKVVVDYGGELVWNSYEQNLIFSGTFWGSLITVLPSMFFIERFSPRHVLQISVALYILVTVITPFLATHFGYFSVFLARIGMGLGEGFVFPTNNAIIGNWFPSSEKSTALSIFTLGNQIASAAGSPMVAAVCASDLGWPATFYFAGIFATGWSILWFFTASSHPAKVKMMTKKEKEYLLANVVKKVHKSEKTRSIPYSKILTSPAFLGQLQCHFFVNLFMTLFQIYLPSYFKEVLHLGVIANGTFTAIPNIFNMIFKVVWGIGIDKLKENKILSNTKAVKVSHGVASFGSSFSLILLAFFVDCSNPTTGLIFFCLMYSSMGTFVSGFYTSLLSLAPQYTATMSAISMFVAMIGRLTTPAVMSMFRKDGTAAEWQNIFIGCSLAHIFSGSIFLLFGSGELQDWAKVEDDQEMNEKEKLKTIENGIVVVEEVDVKNEMSATLVKEDSLCL.

A helical transmembrane segment spans residues 17–37 (IVLLCMIGFFCTTFMRIHFAL). Residues asparagine 44 and asparagine 61 are each glycosylated (N-linked (GlcNAc...) asparagine). 6 consecutive transmembrane segments (helical) span residues 107-127 (LIFSGTFWGSLITVLPSMFFI), 144-164 (ILVTVITPFLATHFGYFSVFL), 167-187 (IGMGLGEGFVFPTNNAIIGNW), 199-219 (IFTLGNQIASAAGSPMVAAVC), 225-245 (WPATFYFAGIFATGWSILWFF), and 292-312 (AFLGQLQCHFFVNLFMTLFQI). An N-linked (GlcNAc...) asparagine glycan is attached at asparagine 329. 5 helical membrane-spanning segments follow: residues 331 to 351 (TFTAIPNIFNMIFKVVWGIGI), 368 to 388 (VSHGVASFGSSFSLILLAFFV), 395 to 415 (TGLIFFCLMYSSMGTFVSGFY), 429 to 451 (MSAISMFVAMIGRLTTPAVMSMF), and 463 to 483 (IFIGCSLAHIFSGSIFLLFGS).

Belongs to the major facilitator superfamily. Sodium/anion cotransporter family.

It is found in the membrane. This is an uncharacterized protein from Caenorhabditis elegans.